The sequence spans 404 residues: Formate-dependent phosphoribosylglycinamide formyltransferase (404 aa).

N(1)-(5-phospho-beta-D-ribosyl)glycinamide is bound by residues 27–28 (EL) and E87. ATP contacts are provided by residues R120, K162, 167–172 (SSGKGQ), 202–205 (EGFI), and E210. One can recognise an ATP-grasp domain in the interval 125–320 (RLAAETLGLP…EFELHARALL (196 aa)). E279 and E291 together coordinate Mg(2+). N(1)-(5-phospho-beta-D-ribosyl)glycinamide contacts are provided by residues D298, K367, and 374-375 (RR).

Belongs to the PurK/PurT family. Homodimer.

It catalyses the reaction N(1)-(5-phospho-beta-D-ribosyl)glycinamide + formate + ATP = N(2)-formyl-N(1)-(5-phospho-beta-D-ribosyl)glycinamide + ADP + phosphate + H(+). The protein operates within purine metabolism; IMP biosynthesis via de novo pathway; N(2)-formyl-N(1)-(5-phospho-D-ribosyl)glycinamide from N(1)-(5-phospho-D-ribosyl)glycinamide (formate route): step 1/1. Involved in the de novo purine biosynthesis. Catalyzes the transfer of formate to 5-phospho-ribosyl-glycinamide (GAR), producing 5-phospho-ribosyl-N-formylglycinamide (FGAR). Formate is provided by PurU via hydrolysis of 10-formyl-tetrahydrofolate. The chain is Formate-dependent phosphoribosylglycinamide formyltransferase from Bordetella pertussis (strain Tohama I / ATCC BAA-589 / NCTC 13251).